The following is a 713-amino-acid chain: Undecaprenyl-diphosphooligosaccharide--protein glycotransferase (713 aa).

The Cytoplasmic portion of the chain corresponds to 1-11 (MLKKEYLKNPY). The chain crosses the membrane as a helical span at residues 12–35 (LVLFAMIVLAYVFSVFCRFYWVWW). Topologically, residues 36 to 96 (ASEFNEYFFN…YWLYKITPFS (61 aa)) are periplasmic. Positions 52 to 54 (SND) match the DXD motif 1 motif. Asp-54 is a binding site for Mn(2+). Residues 97-122 (FESIILYMSTFLSSLVVIPIILLANE) traverse the membrane as a helical segment. The Cytoplasmic portion of the chain corresponds to 123–125 (YKR). Residues 126 to 144 (PLMGFVAALLASVANSYYN) traverse the membrane as a helical segment. Topologically, residues 145 to 152 (RTMSGYYD) are periplasmic. Residue Asp-152 coordinates Mn(2+). Positions 152-154 (DTD) match the DXD motif 2 motif. The chain crosses the membrane as a helical span at residues 153–174 (TDMLVIVLPMFILFFMVRMILK). Over 175 to 176 (KD) the chain is Cytoplasmic. The chain crosses the membrane as a helical span at residues 177–192 (FFSLIALPLFIGIYLW). Residues 193–197 (WYPSS) lie on the Periplasmic side of the membrane. Residue 194 to 196 (YPS) participates in [alpha-D-GalNAc-(1-&gt;4)]2-[beta-D-Glc-(1-&gt;3)]-[alpha-D-GalNAc-(1-&gt;4)]2-alpha-D-GalNAc-(1-&gt;3)-alpha-D-diNAcBac-tri-trans,hepta-cis-undecaprenyl diphosphate binding. A helical transmembrane segment spans residues 198-215 (YTLNVALIGLFLIYTLIF). Residues 216–220 (HRKEK) are Cytoplasmic-facing. A helical transmembrane segment spans residues 221–233 (IFYIAVILSSLTL). Residues 234-237 (SNIA) are Periplasmic-facing. A helical membrane pass occupies residues 238 to 254 (WFYQSAIIVILFALFAL). The Cytoplasmic portion of the chain corresponds to 255–260 (EQKRLN). Residues 261 to 278 (FMIIGILGSATLIFLILS) traverse the membrane as a helical segment. The Periplasmic segment spans residues 279 to 324 (GGVDPILYQLKFYIFRSDESANLTQGFMYFNVNQTIQEVENVDFSE). Tyr-291 provides a ligand contact to [alpha-D-GalNAc-(1-&gt;4)]2-[beta-D-Glc-(1-&gt;3)]-[alpha-D-GalNAc-(1-&gt;4)]2-alpha-D-GalNAc-(1-&gt;3)-alpha-D-diNAcBac-tri-trans,hepta-cis-undecaprenyl diphosphate. The short motif at 313–316 (TIQE) is the TIXE motif element. Glu-316 is a binding site for Mn(2+). The helical transmembrane segment at 325 to 347 (FMRRISGSEIVFLFSLFGFVWLL) threads the bilayer. Residues 348–352 (RKHKS) are Cytoplasmic-facing. Residues 353 to 369 (MIMALPILVLGFLALKG) form a helical membrane-spanning segment. Residues 370 to 373 (GLRF) are Periplasmic-facing. Arg-372 contacts [alpha-D-GalNAc-(1-&gt;4)]2-[beta-D-Glc-(1-&gt;3)]-[alpha-D-GalNAc-(1-&gt;4)]2-alpha-D-GalNAc-(1-&gt;3)-alpha-D-diNAcBac-tri-trans,hepta-cis-undecaprenyl diphosphate. A helical transmembrane segment spans residues 374–396 (TIYSVPVMALGFGFLLSEFKAIL). Over 397–406 (VKKYSQLTSN) the chain is Cytoplasmic. A helical membrane pass occupies residues 407 to 427 (VCIVFATILTLAPVFIHIYNY). Over 428 to 713 (KAPTVFSQNE…RDAKVFKLKI (286 aa)) the chain is Periplasmic. Residues 457 to 459 (WWD) form an interacts with target acceptor peptide in protein substrate region. The short motif at 457-461 (WWDYG) is the WWDYG motif element. Tyr-462 is a [alpha-D-GalNAc-(1-&gt;4)]2-[beta-D-Glc-(1-&gt;3)]-[alpha-D-GalNAc-(1-&gt;4)]2-alpha-D-GalNAc-(1-&gt;3)-alpha-D-diNAcBac-tri-trans,hepta-cis-undecaprenyl diphosphate binding site. Residue Asn-534 is glycosylated (N-linked (DATDGlc) asparagine). The MI motif signature appears at 568-575 (MSLIFSTV).

The protein belongs to the STT3 family. The cofactor is Mg(2+). Mn(2+) serves as cofactor.

The protein localises to the cell inner membrane. It catalyses the reaction tritrans,heptacis-undecaprenyl diphosphooligosaccharide + [protein]-L-asparagine = tritrans,heptacis-undecaprenyl diphosphate + a glycoprotein with the oligosaccharide chain attached by N-beta-D-glycosyl linkage to protein L-asparagine.. The protein operates within protein modification; protein glycosylation. In terms of biological role, oligosaccharyl transferase (OST) that catalyzes the initial transfer of a defined glycan (GalNAc(2)GlcGalNAc(3)Bac(NAc)(2) in eubacteria, where Bac(NAc)(2) is di-N-acetyl bacillosamine) from the lipid carrier undecaprenol-pyrophosphate to an asparagine residue within an Asp/Glu-Asn-X-Ser/Thr consensus motif in nascent polypeptide chains, the first step in protein N-glycosylation. This Campylobacter jejuni subsp. jejuni serotype O:2 (strain ATCC 700819 / NCTC 11168) protein is Undecaprenyl-diphosphooligosaccharide--protein glycotransferase (pglB).